The primary structure comprises 563 residues: Septation ring formation regulator EzrA (563 aa).

Topologically, residues 1-2 are extracellular; it reads ME. The chain crosses the membrane as a helical span at residues 3–21; the sequence is LVIGLLVILLALFAAGYFF. Residues 22–563 lie on the Cytoplasmic side of the membrane; sequence RKKIYTEIDR…KKIKADQSAS (542 aa). 3 coiled-coil regions span residues 133–159, 243–276, and 309–529; these read EEKS…AYSH, KGYK…ELDV, and SKMP…ERLF.

It belongs to the EzrA family.

The protein resides in the cell membrane. Negative regulator of FtsZ ring formation; modulates the frequency and position of FtsZ ring formation. Inhibits FtsZ ring formation at polar sites. Interacts either with FtsZ or with one of its binding partners to promote depolymerization. This chain is Septation ring formation regulator EzrA, found in Bacillus velezensis (strain DSM 23117 / BGSC 10A6 / LMG 26770 / FZB42) (Bacillus amyloliquefaciens subsp. plantarum).